The primary structure comprises 323 residues: Acetyl-coenzyme A carboxylase carboxyl transferase subunit alpha (323 aa).

Positions 40–293 constitute a CoA carboxyltransferase C-terminal domain; sequence LSEKSLQLTK…RKALSDSLKT (254 aa).

Belongs to the AccA family. Acetyl-CoA carboxylase is a heterohexamer composed of biotin carboxyl carrier protein (AccB), biotin carboxylase (AccC) and two subunits each of ACCase subunit alpha (AccA) and ACCase subunit beta (AccD).

Its subcellular location is the cytoplasm. It carries out the reaction N(6)-carboxybiotinyl-L-lysyl-[protein] + acetyl-CoA = N(6)-biotinyl-L-lysyl-[protein] + malonyl-CoA. Its pathway is lipid metabolism; malonyl-CoA biosynthesis; malonyl-CoA from acetyl-CoA: step 1/1. Component of the acetyl coenzyme A carboxylase (ACC) complex. First, biotin carboxylase catalyzes the carboxylation of biotin on its carrier protein (BCCP) and then the CO(2) group is transferred by the carboxyltransferase to acetyl-CoA to form malonyl-CoA. The sequence is that of Acetyl-coenzyme A carboxylase carboxyl transferase subunit alpha from Polynucleobacter asymbioticus (strain DSM 18221 / CIP 109841 / QLW-P1DMWA-1) (Polynucleobacter necessarius subsp. asymbioticus).